The sequence spans 89 residues: Small ribosomal subunit protein uS15 (89 aa).

Belongs to the universal ribosomal protein uS15 family. In terms of assembly, part of the 30S ribosomal subunit. Forms a bridge to the 50S subunit in the 70S ribosome, contacting the 23S rRNA.

One of the primary rRNA binding proteins, it binds directly to 16S rRNA where it helps nucleate assembly of the platform of the 30S subunit by binding and bridging several RNA helices of the 16S rRNA. In terms of biological role, forms an intersubunit bridge (bridge B4) with the 23S rRNA of the 50S subunit in the ribosome. The chain is Small ribosomal subunit protein uS15 from Chlorobium luteolum (strain DSM 273 / BCRC 81028 / 2530) (Pelodictyon luteolum).